Here is a 1108-residue protein sequence, read N- to C-terminus: AP-3 complex subunit beta (1108 aa).

4 HEAT repeats span residues 90–127, 327–363, 397–433, and 434–471; these read DSALLSINTIQKSLNDQSQVIRASALRVMSSIRVIDII, IEAQKVGKSLVRILRSGPEVQYITLTNISTMVTLRPS, ENIGKILKEFKEYVKNEDKKFVAATIQAIGSCASTVP, and DVTESCIYGLMSLLSNQSTVVVAESVIVLKRLLQLNAT. Basic and acidic residues predominate over residues 480 to 490; the sequence is KEKEKEKDVKE. Disordered stretches follow at residues 480–501, 736–797, and 811–835; these read KEKEKEKDVKENQSTISKHSSS, DEEE…YDGE, and LFGITNDDNNQTANGIGGGGSGEEE. Composition is skewed to acidic residues over residues 736–764 and 780–797; these read DEEEEDEEEYDEEEEEEEYEEQNEYEDFF and YDEDEYNQDIDDGEYDGE.

This sequence belongs to the adaptor complexes large subunit family. Adaptor protein complex 3 (AP-3) is a heterotetramer composed of two large adaptins (delta-type subunit and beta-type subunit), a medium adaptin (mu-type subunit) and a small adaptin (sigma-type subunit).

It is found in the endosome membrane. Its function is as follows. Part of the AP-3 complex, an adaptor-related complex which is essential for the compartmentalization of the endocytic pathway. This chain is AP-3 complex subunit beta (ap3b-1), found in Dictyostelium discoideum (Social amoeba).